The primary structure comprises 266 residues: Tryptophan synthase alpha chain (266 aa).

Active-site proton acceptor residues include E49 and D60.

This sequence belongs to the TrpA family. In terms of assembly, tetramer of two alpha and two beta chains.

The enzyme catalyses (1S,2R)-1-C-(indol-3-yl)glycerol 3-phosphate + L-serine = D-glyceraldehyde 3-phosphate + L-tryptophan + H2O. It functions in the pathway amino-acid biosynthesis; L-tryptophan biosynthesis; L-tryptophan from chorismate: step 5/5. Its function is as follows. The alpha subunit is responsible for the aldol cleavage of indoleglycerol phosphate to indole and glyceraldehyde 3-phosphate. The sequence is that of Tryptophan synthase alpha chain from Thioalkalivibrio sulfidiphilus (strain HL-EbGR7).